The sequence spans 262 residues: uncharacterized protein (262 aa).

The 103-residue stretch at 5–107 (PLISLDVEGV…MIEHKLRTFC (103 aa)) folds into the BTB domain. The region spanning 182-195 (ISLPRNFTHIAHVG) is the CRIB domain.

This is an uncharacterized protein from Caenorhabditis elegans.